A 215-amino-acid chain; its full sequence is Ribose-5-phosphate isomerase A (215 aa).

Substrate-binding positions include 26–29, 79–82, and 92–95; these read TGST, DGAD, and KGGG. Glu-101 serves as the catalytic Proton acceptor. Lys-119 is a binding site for substrate.

Belongs to the ribose 5-phosphate isomerase family. In terms of assembly, homodimer.

It carries out the reaction aldehydo-D-ribose 5-phosphate = D-ribulose 5-phosphate. It functions in the pathway carbohydrate degradation; pentose phosphate pathway; D-ribose 5-phosphate from D-ribulose 5-phosphate (non-oxidative stage): step 1/1. Catalyzes the reversible conversion of ribose-5-phosphate to ribulose 5-phosphate. The protein is Ribose-5-phosphate isomerase A of Stenotrophomonas maltophilia (strain K279a).